The primary structure comprises 512 residues: Acid-sensing ion channel 2 (512 aa).

Residues 1–37 (MDLKESPSEGSLQPSSIQIFANTSTLHGIRHIFVYGP) are Cytoplasmic-facing. Residues Ser8 and Ser11 each carry the phosphoserine modification. A helical membrane pass occupies residues 38 to 58 (LTIRRVLWAVAFVGSLGLLLV). Residues 59–427 (ESSERVSYYF…EQKKAYEVAA (369 aa)) are Extracellular-facing. Intrachain disulfides connect Cys92-Cys193, Cys289-Cys364, Cys307-Cys360, Cys311-Cys358, Cys320-Cys342, and Cys322-Cys334. N-linked (GlcNAc...) asparagine glycosylation is found at Asn365 and Asn392. The chain crosses the membrane as a helical span at residues 428–448 (LLGDIGGQMGLFIGASLLTIL). Residues 441–443 (GAS) carry the GAS motif; ion selectivity filter motif. The Cytoplasmic segment spans residues 449–512 (ELFDYIYELI…ALGTLEEIAC (64 aa)).

This sequence belongs to the amiloride-sensitive sodium channel (TC 1.A.6) family. ASIC2 subfamily. In terms of assembly, can form homotrimers. Heterotrimer; forms functional heterotrimers producing channel with different properties. Forms heterotrimers with ASIC1; while ASIC1 determines current amplitude, ASIC2 influences the properties of the current. Forms heterotrimers with ASIC3; resulting in channels with distinct properties. Interacts with STOM; STOM regulates the gating of ASIC2-containing channels. Interacts with PICK1; promotes ASIC3 phosphorylation by PKC and activation of ASIC2/ASIC3 heterotrimers. As to expression, expressed in sciatic nerve and dorsal root ganglion (DRG) (at protein level). Both isoforms display the same expression pattern except in DRG where isoform 2 is more abundantly expressed. Widely distributed throughout the brain. Highly expressed in the main olfactory bulb, neo- and allo-cortical regions, hippocampal formation, habenula, basolateral amygdaloid nuclei, and cerebellum. In the olfactory system, expressed in the glomerular cell layer, the internal granular layer, and the mitral and internal plexiform cell layers. Within the glomerular layer, restricted to the periglomerular cells. In the neocortex, strongly expressed in the large pyramidal neurons in all cortical layers as well as in the oligo-, astro-, or micro-glia cells. In the hippocampal formation, expressed in dentate granule cells and hilar neurons, as well as in pyramidal cells of CA1-CA3 subfields. Expressed in stratum oriens and radiatum of all subfields. Within the thalamus, expressed moderately in the medial and lateral habenula. In the cerebellar cortex expressed in Purkinje cells and granule cells. Expressed at low levels in choroid plexus.

It localises to the cell membrane. The catalysed reaction is Na(+)(in) = Na(+)(out). It carries out the reaction K(+)(in) = K(+)(out). The enzyme catalyses Li(+)(in) = Li(+)(out). With respect to regulation, inhibited by the diuretic drug amiloride. Inhibited by gadolinium ions, the heterotrimer with ASIC3 being more sensitive. Zn(2+) potentiates the acid activation of ASIC2-containing homomeric and heteromeric channels. The snake venom mambalgin-1 and mambalgin-2 inhibit the homotrimers composed of ASIC1 and ASIC2 and have strong analgesic effects. Functionally, forms pH-gated trimeric sodium channels that act as postsynaptic excitatory sensors in the nervous system. Upon extracellular acidification, these channels generate rapid, transient inward currents that fully desensitize. Highly selective for sodium, they are permeable to other cations. By forming heterotrimeric channels with ASIC1, could contribute to synaptic plasticity, learning, and memory. Additionally, as acid sensors at nerve terminals, plays a role in mechanosensation and phototransduction. In terms of biological role, has no pH-gated sodium channel activity per se but can associate with other ASICs to produce functional channels with specific properties. The polypeptide is Acid-sensing ion channel 2 (Rattus norvegicus (Rat)).